A 388-amino-acid chain; its full sequence is Succinate--CoA ligase [ADP-forming] subunit beta (388 aa).

In terms of domain architecture, ATP-grasp spans 9-244; that stretch reads KDLLVSYDIA…PSQENVRDVL (236 aa). ATP is bound by residues lysine 46, 53–55, valine 102, and glutamate 107; that span reads GRG. Residues asparagine 199 and aspartate 213 each contribute to the Mg(2+) site. Substrate is bound by residues asparagine 264 and 321-323; that span reads GIM.

Belongs to the succinate/malate CoA ligase beta subunit family. As to quaternary structure, heterotetramer of two alpha and two beta subunits. Mg(2+) serves as cofactor.

It carries out the reaction succinate + ATP + CoA = succinyl-CoA + ADP + phosphate. It catalyses the reaction GTP + succinate + CoA = succinyl-CoA + GDP + phosphate. It participates in carbohydrate metabolism; tricarboxylic acid cycle; succinate from succinyl-CoA (ligase route): step 1/1. Functionally, succinyl-CoA synthetase functions in the citric acid cycle (TCA), coupling the hydrolysis of succinyl-CoA to the synthesis of either ATP or GTP and thus represents the only step of substrate-level phosphorylation in the TCA. The beta subunit provides nucleotide specificity of the enzyme and binds the substrate succinate, while the binding sites for coenzyme A and phosphate are found in the alpha subunit. This is Succinate--CoA ligase [ADP-forming] subunit beta from Chlamydia caviae (strain ATCC VR-813 / DSM 19441 / 03DC25 / GPIC) (Chlamydophila caviae).